We begin with the raw amino-acid sequence, 151 residues long: UPF0208 membrane protein YfbV (151 aa).

Residues 1 to 45 (MSTPDNRSVNFFSLFCRGQHYSKTWPLEKRLAPVFVENRVIKMTR) are Cytoplasmic-facing. A helical transmembrane segment spans residues 46 to 65 (YAIRFMPPIAVFTLCWQIAL). Topologically, residues 66 to 68 (GGQ) are periplasmic. A helical membrane pass occupies residues 69–91 (LGPAVATALFALSLPMQGLWWLG). Topologically, residues 92–151 (KRSVTPLPPAILNWFYEVRGKLQESGQVLAPVEGKPDYQALADTLKRAFKQLDKTFLDDL) are cytoplasmic.

Belongs to the UPF0208 family.

It localises to the cell inner membrane. This chain is UPF0208 membrane protein YfbV (yfbV), found in Escherichia coli O6:H1 (strain CFT073 / ATCC 700928 / UPEC).